The sequence spans 322 residues: Thioredoxin reductase (322 aa).

Residues 12–15 (SGPA), 34–42 (EGAVTAGGA), Asn-51, and Val-84 contribute to the FAD site. An intrachain disulfide couples Cys-136 to Cys-139. The NADP(+) site is built by His-176, Arg-182, and Tyr-259. FAD is bound by residues Asp-279 and 286–289 (RQAI). Arg-286 lines the NADP(+) pocket.

This sequence belongs to the class-II pyridine nucleotide-disulfide oxidoreductase family. Homodimer. The cofactor is FAD.

The catalysed reaction is [thioredoxin]-dithiol + NADP(+) = [thioredoxin]-disulfide + NADPH + H(+). Functionally, component of the thioredoxin-thioredoxin reductase system which may be involved in biosynthesis of penicillins and cephalosporins and may be important in determining the thiol-disulfide redox balance. In Streptomyces clavuligerus, this protein is Thioredoxin reductase.